The chain runs to 413 residues: ORC1-type DNA replication protein 10 (413 aa).

Residues 63–67 (VGKTA), Tyr211, and Arg223 each bind ATP.

Belongs to the CDC6/cdc18 family.

Involved in regulation of DNA replication. This Halobacterium salinarum (strain ATCC 700922 / JCM 11081 / NRC-1) (Halobacterium halobium) protein is ORC1-type DNA replication protein 10 (orc10).